A 343-amino-acid chain; its full sequence is Peptide methionine sulfoxide reductase msrA/msrB (343 aa).

The peptide methionine sulfoxide reductase A stretch occupies residues 21 to 174; it reads KVIYLAGGCF…PNGYCHIDLK (154 aa). Catalysis depends on cysteine 29, which acts as the Cysteine sulfenic acid (-SOH) intermediate. Residues 191–314 form the MsrB domain; the sequence is DEVLKKKLTQ…NSASLRFIPL (124 aa). The active-site Nucleophile is the cysteine 303.

This sequence in the N-terminal section; belongs to the MsrA Met sulfoxide reductase family. The protein in the C-terminal section; belongs to the MsrB Met sulfoxide reductase family.

It carries out the reaction L-methionyl-[protein] + [thioredoxin]-disulfide + H2O = L-methionyl-(S)-S-oxide-[protein] + [thioredoxin]-dithiol. It catalyses the reaction [thioredoxin]-disulfide + L-methionine + H2O = L-methionine (S)-S-oxide + [thioredoxin]-dithiol. The catalysed reaction is L-methionyl-[protein] + [thioredoxin]-disulfide + H2O = L-methionyl-(R)-S-oxide-[protein] + [thioredoxin]-dithiol. Its function is as follows. Has an important function as a repair enzyme for proteins that have been inactivated by oxidation. Catalyzes the reversible oxidation-reduction of methionine sulfoxide in proteins to methionine. The chain is Peptide methionine sulfoxide reductase msrA/msrB from Enterococcus faecalis (Streptococcus faecalis).